Here is a 463-residue protein sequence, read N- to C-terminus: MHEKLTTRFAPSPTGYLHIGGLRTALYNYLYARKNGGNFLLRIEDTDLKRNSKEATKAIIEAFKWCGLEHDGEVTYQSERFDLYKEYVKKLLDEGKAYYCYMSKEELEELRAKQEAAKERPRYDGRYREFTGTPPQGIEPVVRIKAPQSGEIVFKDGVKGEVRFKAEDIMDDFIIARSDGTPTYNFTVVIDDALMGVSDVIRGDDHLSNTPKQIVLYEALGFKIPQFFHVAMIHGEDGKKLSKRHGATDVMEYKEMGILPQALLNFLVRLGWSHGDDEVFSLEDLKKLFDPYHINKSASCYNAKKLEWLNTHYIKTLPFEEIKRQLKDLGFDLSVYEKAGFLLDLLRERAKTLHDIINGAKSIVNAPQNYDENAVQKFVNENNLELLQAFANTLKDPKTGKDFEDFTNDFLEKKEAKLKDLAQPIRIALTGSAVSPSIFEVLEFLGVDECKKRIENFLKVRGK.

The 'HIGH' region signature appears at 11-21 (PSPTGYLHIGG). Positions 240–244 (KLSKR) match the 'KMSKS' region motif. ATP is bound at residue Lys243.

Belongs to the class-I aminoacyl-tRNA synthetase family. Glutamate--tRNA ligase type 1 subfamily. In terms of assembly, monomer.

Its subcellular location is the cytoplasm. The enzyme catalyses tRNA(Glu) + L-glutamate + ATP = L-glutamyl-tRNA(Glu) + AMP + diphosphate. Functionally, catalyzes the attachment of glutamate to tRNA(Glu) in a two-step reaction: glutamate is first activated by ATP to form Glu-AMP and then transferred to the acceptor end of tRNA(Glu). This is Glutamate--tRNA ligase 1 from Campylobacter jejuni subsp. doylei (strain ATCC BAA-1458 / RM4099 / 269.97).